Here is a 211-residue protein sequence, read N- to C-terminus: MYQPDFPPVPFRLGLYPVVDSVVWIERLLQAGVKTLQLRIKDKCDEDVEPDVANAIKLGRRYGARLFINDYWQLAIQHQAYGVHLGQEDLETTDLSAIRNAGLRLGVSTHDDMEIDVALAARPSYIALGHVFPTQTKQMPSAPQGLEQLTRHIERLADYPTVAIGGISLERVPAVLKTGVGSVAVVSAITQAADWQVATAQLLQLAGAGDE.

Residues 37-41 and asparagine 69 each bind 4-amino-2-methyl-5-(diphosphooxymethyl)pyrimidine; that span reads QLRIK. Residues aspartate 70 and aspartate 89 each contribute to the Mg(2+) site. Serine 108 serves as a coordination point for 4-amino-2-methyl-5-(diphosphooxymethyl)pyrimidine. 2-[(2R,5Z)-2-carboxy-4-methylthiazol-5(2H)-ylidene]ethyl phosphate is bound at residue 134 to 136; it reads TQT. Lysine 137 is a binding site for 4-amino-2-methyl-5-(diphosphooxymethyl)pyrimidine. 2-[(2R,5Z)-2-carboxy-4-methylthiazol-5(2H)-ylidene]ethyl phosphate contacts are provided by residues glycine 166 and 186 to 187; that span reads VS.

It belongs to the thiamine-phosphate synthase family. It depends on Mg(2+) as a cofactor.

It catalyses the reaction 2-[(2R,5Z)-2-carboxy-4-methylthiazol-5(2H)-ylidene]ethyl phosphate + 4-amino-2-methyl-5-(diphosphooxymethyl)pyrimidine + 2 H(+) = thiamine phosphate + CO2 + diphosphate. The enzyme catalyses 2-(2-carboxy-4-methylthiazol-5-yl)ethyl phosphate + 4-amino-2-methyl-5-(diphosphooxymethyl)pyrimidine + 2 H(+) = thiamine phosphate + CO2 + diphosphate. It carries out the reaction 4-methyl-5-(2-phosphooxyethyl)-thiazole + 4-amino-2-methyl-5-(diphosphooxymethyl)pyrimidine + H(+) = thiamine phosphate + diphosphate. The protein operates within cofactor biosynthesis; thiamine diphosphate biosynthesis; thiamine phosphate from 4-amino-2-methyl-5-diphosphomethylpyrimidine and 4-methyl-5-(2-phosphoethyl)-thiazole: step 1/1. Functionally, condenses 4-methyl-5-(beta-hydroxyethyl)thiazole monophosphate (THZ-P) and 2-methyl-4-amino-5-hydroxymethyl pyrimidine pyrophosphate (HMP-PP) to form thiamine monophosphate (TMP). This is Thiamine-phosphate synthase from Enterobacter sp. (strain 638).